We begin with the raw amino-acid sequence, 134 residues long: Transcriptional activator protein (134 aa).

The Nuclear localization signal motif lies at 17–31 (KVQHRIAKKTTRRRR). A zinc finger lies at 36-53 (CGCSYFVALGCHNHGFTH). The tract at residues 73 to 103 (KSPVFQDNQTPRETISEEPRHNHNTSPIQLQ) is disordered. A compositionally biased stretch (polar residues) spans 75-85 (PVFQDNQTPRE). Residues 119–134 (NLDSFTSSDLAFLKSI) form a transactivation region.

It belongs to the geminiviridae transcriptional activator protein family. As to quaternary structure, monomer. Homodimer. Homooligomer. Self-interaction correlates with nuclear localization and efficient activation of transcription. Monomers suppress local silencing by interacting with and inactivating host adenosine kinase 2 (ADK2) in the cytoplasm. Interacts with and inhibits host SNF1 kinase. Binds to ssDNA. May interact with host RPS27A. In terms of processing, phosphorylated.

It localises to the host nucleus. Its subcellular location is the host cytoplasm. In terms of biological role, multifunctional protein that modulates host antiviral defenses and promotes host attractiveness to insect vectors. Acts as a suppressor of RNA-mediated gene silencing, also known as post-transcriptional gene silencing (PTGS), a mechanism of plant viral defense that limits the accumulation of viral RNAs. TrAP suppresses the host RNA silencing by inhibiting adenosine kinase 2 (ADK2), a kinase involved in a general methylation pathway. Also suppresses the host basal defense by interacting with and inhibiting SNF1 kinase, a key regulator of cell metabolism implicated in innate antiviral defense. Inhibits signal transduction by the phytohormone jasmonate, making the infected plant more attractive to aphids, which are the second host to play a role as a dissemination vector. Acts by binding to ubiquitin precursor RPS27A, thereby preventing ubiquitin degradation of JAZ. The sequence is that of Transcriptional activator protein from Tomato yellow leaf curl China virus (TYLCCNV).